Consider the following 567-residue polypeptide: Arginine--tRNA ligase (567 aa).

Positions 121–131 match the 'HIGH' region motif; that stretch reads ANPNGPLHVGH.

It belongs to the class-I aminoacyl-tRNA synthetase family.

The protein localises to the cytoplasm. It catalyses the reaction tRNA(Arg) + L-arginine + ATP = L-arginyl-tRNA(Arg) + AMP + diphosphate. The protein is Arginine--tRNA ligase of Methanosarcina acetivorans (strain ATCC 35395 / DSM 2834 / JCM 12185 / C2A).